The primary structure comprises 466 residues: Cysteine--tRNA ligase (466 aa).

Cys28 serves as a coordination point for Zn(2+). Residues 30 to 40 (PTVYNYIHIGN) carry the 'HIGH' region motif. Zn(2+)-binding residues include Cys208, His233, and Glu237. The 'KMSKS' region signature appears at 265-269 (KMSKS). Lys268 is an ATP binding site.

This sequence belongs to the class-I aminoacyl-tRNA synthetase family. As to quaternary structure, monomer. Requires Zn(2+) as cofactor.

Its subcellular location is the cytoplasm. The enzyme catalyses tRNA(Cys) + L-cysteine + ATP = L-cysteinyl-tRNA(Cys) + AMP + diphosphate. The sequence is that of Cysteine--tRNA ligase from Staphylococcus epidermidis (strain ATCC 35984 / DSM 28319 / BCRC 17069 / CCUG 31568 / BM 3577 / RP62A).